We begin with the raw amino-acid sequence, 973 residues long: Mediator of RNA polymerase II transcription subunit 16 (973 aa).

The protein belongs to the Mediator complex subunit 16 family. As to quaternary structure, component of the Mediator complex.

The protein resides in the nucleus. Its function is as follows. Component of the Mediator complex, a coactivator involved in the regulated transcription of nearly all RNA polymerase II-dependent genes. Mediator functions as a bridge to convey information from gene-specific regulatory proteins to the basal RNA polymerase II transcription machinery. Mediator is recruited to promoters by direct interactions with regulatory proteins and serves as a scaffold for the assembly of a functional preinitiation complex with RNA polymerase II and the general transcription factors. The sequence is that of Mediator of RNA polymerase II transcription subunit 16 (SIN4) from Candida glabrata (strain ATCC 2001 / BCRC 20586 / JCM 3761 / NBRC 0622 / NRRL Y-65 / CBS 138) (Yeast).